A 158-amino-acid chain; its full sequence is MQIISNDEHELLTTSQIELVESILQHAAQLEGVEEPSELSVTYLTNAEIHEVNREWRGKDAPTDVISFAFDEMGDEEMDFMLDEDEPHLLGDLVISVERCREQAADYGHSFERELGFLAIHGFLHLLGYDHMTPEEEAEMTARQEEVLTHFELKRGNV.

The Zn(2+) site is built by His-121, His-125, and His-131.

The protein belongs to the endoribonuclease YbeY family. Zn(2+) is required as a cofactor.

The protein resides in the cytoplasm. Its function is as follows. Single strand-specific metallo-endoribonuclease involved in late-stage 70S ribosome quality control and in maturation of the 3' terminus of the 16S rRNA. This Exiguobacterium sp. (strain ATCC BAA-1283 / AT1b) protein is Endoribonuclease YbeY.